The primary structure comprises 416 residues: 3-oxoacyl-[acyl-carrier-protein] synthase 1 (416 aa).

The Ketosynthase family 3 (KS3) domain maps to 11-415 (FPSVVVTAVT…GHNVALAFGR (405 aa)). Active-site for beta-ketoacyl synthase activity residues include C171, H311, and H345. Residues H311 and H345 each coordinate substrate.

It belongs to the thiolase-like superfamily. Beta-ketoacyl-ACP synthases family.

Its subcellular location is the cytoplasm. The enzyme catalyses an ultra-long-chain mono-unsaturated fatty acyl-[ACP] + malonyl-[ACP] + H(+) = a 3-oxo-ultra-long-chain mono-unsaturated fatty acyl-[ACP] + holo-[ACP] + CO2. It functions in the pathway lipid metabolism; mycolic acid biosynthesis. Part of the mycobacterial fatty acid elongation system FAS-II, which is involved in mycolic acid biosynthesis. Catalyzes the elongation of long chain acyl-ACP substrates by the addition of two carbons from malonyl-ACP to an acyl acceptor. Involved in the initial extension of the mycolate chain and forms monounsaturated fatty acids that averaged 40 carbons in length. In Mycobacterium tuberculosis (strain ATCC 35801 / TMC 107 / Erdman), this protein is 3-oxoacyl-[acyl-carrier-protein] synthase 1 (kasA).